Here is a 384-residue protein sequence, read N- to C-terminus: Chaperone protein DnaJ (384 aa).

The J domain maps to 5 to 70 (DYYEVLGVAR…QKKAAYDRFG (66 aa)). A CR-type zinc finger spans residues 138–216 (GAQKTINVPG…CRGAGRVQKE (79 aa)). Cys151, Cys154, Cys168, Cys171, Cys190, Cys193, Cys204, and Cys207 together coordinate Zn(2+). CXXCXGXG motif repeat units follow at residues 151–158 (CAACNGTG), 168–175 (CPTCSGMG), 190–197 (CPTCSGHG), and 204–211 (CQECRGAG). Residues 300-322 (KVPPGTQSGKQLRLRGKGMPPLR) are disordered.

The protein belongs to the DnaJ family. Homodimer. It depends on Zn(2+) as a cofactor.

The protein resides in the cytoplasm. Its function is as follows. Participates actively in the response to hyperosmotic and heat shock by preventing the aggregation of stress-denatured proteins and by disaggregating proteins, also in an autonomous, DnaK-independent fashion. Unfolded proteins bind initially to DnaJ; upon interaction with the DnaJ-bound protein, DnaK hydrolyzes its bound ATP, resulting in the formation of a stable complex. GrpE releases ADP from DnaK; ATP binding to DnaK triggers the release of the substrate protein, thus completing the reaction cycle. Several rounds of ATP-dependent interactions between DnaJ, DnaK and GrpE are required for fully efficient folding. Also involved, together with DnaK and GrpE, in the DNA replication of plasmids through activation of initiation proteins. This Paracoccus denitrificans (strain Pd 1222) protein is Chaperone protein DnaJ.